Reading from the N-terminus, the 452-residue chain is ADP-dependent glucose/glucosamine kinase (452 aa).

Positions 1 to 452 (MSWDEMYRDA…AFVSEFSLSS (452 aa)) constitute an ADPK domain. Residues Asp-33, Glu-87, 111-112 (GQ), and His-174 contribute to the D-glucose site. Residue Glu-264 coordinates Mg(2+). Residue Asn-290 participates in ADP binding. Mg(2+) is bound at residue Glu-293. Residues 339–340 (HT), Val-426, and Gly-436 each bind ADP. A D-glucose-binding site is contributed by Asp-437. Asp-437 serves as a coordination point for Mg(2+). Catalysis depends on Asp-437, which acts as the Proton acceptor.

The protein belongs to the ADP-dependent glucokinase family. Requires Mg(2+) as cofactor.

The protein resides in the cytoplasm. The catalysed reaction is D-glucose + ADP = D-glucose 6-phosphate + AMP + H(+). It carries out the reaction D-glucosamine + ADP = D-glucosamine 6-phosphate + AMP + H(+). Its pathway is carbohydrate degradation; glycolysis. Its function is as follows. Catalyzes the ADP-dependent phosphorylation of D-glucose to D-glucose 6-phosphate and glucosamine to glucosamine 6-phosphate. This is ADP-dependent glucose/glucosamine kinase from Pyrococcus abyssi (strain GE5 / Orsay).